We begin with the raw amino-acid sequence, 184 residues long: NADH-quinone oxidoreductase subunit B (184 aa).

Residues cysteine 37, cysteine 38, cysteine 103, and cysteine 132 each coordinate [4Fe-4S] cluster. Residues 164–184 (HEREEAAKHALPTHSMKGLLR) are disordered.

Belongs to the complex I 20 kDa subunit family. As to quaternary structure, NDH-1 is composed of 14 different subunits. Subunits NuoB, C, D, E, F, and G constitute the peripheral sector of the complex. Requires [4Fe-4S] cluster as cofactor.

It localises to the cell membrane. It carries out the reaction a quinone + NADH + 5 H(+)(in) = a quinol + NAD(+) + 4 H(+)(out). Its function is as follows. NDH-1 shuttles electrons from NADH, via FMN and iron-sulfur (Fe-S) centers, to quinones in the respiratory chain. The immediate electron acceptor for the enzyme in this species is believed to be a menaquinone. Couples the redox reaction to proton translocation (for every two electrons transferred, four hydrogen ions are translocated across the cytoplasmic membrane), and thus conserves the redox energy in a proton gradient. The chain is NADH-quinone oxidoreductase subunit B from Acidothermus cellulolyticus (strain ATCC 43068 / DSM 8971 / 11B).